The chain runs to 216 residues: Deoxyribose-phosphate aldolase (216 aa).

Residue aspartate 89 is the Proton donor/acceptor of the active site. The Schiff-base intermediate with acetaldehyde role is filled by lysine 152. The active-site Proton donor/acceptor is the lysine 181.

This sequence belongs to the DeoC/FbaB aldolase family. DeoC type 1 subfamily.

The protein resides in the cytoplasm. The catalysed reaction is 2-deoxy-D-ribose 5-phosphate = D-glyceraldehyde 3-phosphate + acetaldehyde. It functions in the pathway carbohydrate degradation; 2-deoxy-D-ribose 1-phosphate degradation; D-glyceraldehyde 3-phosphate and acetaldehyde from 2-deoxy-alpha-D-ribose 1-phosphate: step 2/2. Functionally, catalyzes a reversible aldol reaction between acetaldehyde and D-glyceraldehyde 3-phosphate to generate 2-deoxy-D-ribose 5-phosphate. The protein is Deoxyribose-phosphate aldolase of Clostridium tetani (strain Massachusetts / E88).